Consider the following 150-residue polypeptide: Protein SprT-like (150 aa).

A SprT-like domain is found at leucine 6–arginine 147. Histidine 67 serves as a coordination point for Zn(2+). Glutamate 68 is an active-site residue. Residue histidine 71 coordinates Zn(2+).

Belongs to the SprT family. It depends on Zn(2+) as a cofactor.

Its subcellular location is the cytoplasm. This is Protein SprT-like (ydcK) from Bacillus subtilis (strain 168).